A 116-amino-acid chain; its full sequence is Non-specific lipid-transfer protein C, cotyledon-specific isoform (116 aa).

An N-terminal signal peptide occupies residues 1 to 24; that stretch reads MKNVVFSVLLLLSFLFCLANTNEA. 4 disulfide bridges follow: Cys-28–Cys-76, Cys-38–Cys-53, Cys-54–Cys-98, and Cys-74–Cys-112.

This sequence belongs to the plant LTP family.

Its function is as follows. Plant non-specific lipid-transfer proteins transfer phospholipids as well as galactolipids across membranes. May play a role in wax or cutin deposition in the cell walls of expanding epidermal cells and certain secretory tissues. The sequence is that of Non-specific lipid-transfer protein C, cotyledon-specific isoform from Ricinus communis (Castor bean).